A 429-amino-acid polypeptide reads, in one-letter code: GTPase Obg (429 aa).

One can recognise an Obg domain in the interval 1–158 (MFYDTAKIYV…RWLLLELKLL (158 aa)). Residues 159–329 (ADVGLVGYPN…LIYRLWEIIS (171 aa)) form the OBG-type G domain. GTP is bound by residues 165 to 172 (GYPNAGKS), 190 to 194 (FTTLT), 212 to 215 (DIPG), 282 to 285 (NKMD), and 310 to 312 (SAL). Residues serine 172 and threonine 192 each coordinate Mg(2+). The OCT domain occupies 344–421 (IKEQPEEGFV…IGKFEFYFVD (78 aa)).

Belongs to the TRAFAC class OBG-HflX-like GTPase superfamily. OBG GTPase family. Monomer. It depends on Mg(2+) as a cofactor.

Its subcellular location is the cytoplasm. In terms of biological role, an essential GTPase which binds GTP, GDP and possibly (p)ppGpp with moderate affinity, with high nucleotide exchange rates and a fairly low GTP hydrolysis rate. Plays a role in control of the cell cycle, stress response, ribosome biogenesis and in those bacteria that undergo differentiation, in morphogenesis control. The protein is GTPase Obg of Carboxydothermus hydrogenoformans (strain ATCC BAA-161 / DSM 6008 / Z-2901).